The chain runs to 203 residues: Endo-type membrane-bound lytic murein transglycosylase A (203 aa).

An N-terminal signal peptide occupies residues 1-15; the sequence is MKLRWFAFLMVLLAG. Cysteine 16 is lipidated: N-palmitoyl cysteine. Cysteine 16 carries the S-diacylglycerol cysteine lipid modification.

The protein belongs to the transglycosylase Slt family.

It is found in the cell outer membrane. The enzyme catalyses Endolytic cleavage of the (1-&gt;4)-beta-glycosidic linkage between N-acetylmuramic acid (MurNAc) and N-acetylglucosamine (GlcNAc) residues in peptidoglycan with concomitant formation of a 1,6-anhydrobond in the MurNAc residue.. In terms of biological role, murein-degrading enzyme. May play a role in recycling of muropeptides during cell elongation and/or cell division. Preferentially cleaves at a distance of more than two disaccharide units from the ends of the glycan chain. The sequence is that of Endo-type membrane-bound lytic murein transglycosylase A from Enterobacter sp. (strain 638).